A 63-amino-acid chain; its full sequence is Large ribosomal subunit protein bL28 (63 aa).

Belongs to the bacterial ribosomal protein bL28 family.

This is Large ribosomal subunit protein bL28 from Pelobacter propionicus (strain DSM 2379 / NBRC 103807 / OttBd1).